The chain runs to 65 residues: MPKLKTKSGAAKRFKKTGKGGFKHRCANRAHINTKMTTKRKRHLRGMNQVAKVDTTSLVQQMPYA.

Disordered stretches follow at residues 1 to 23 (MPKL…GGFK) and 36 to 65 (MTTK…MPYA). Polar residues predominate over residues 54–65 (DTTSLVQQMPYA).

The protein belongs to the bacterial ribosomal protein bL35 family.

The sequence is that of Large ribosomal subunit protein bL35 from Francisella tularensis subsp. tularensis (strain FSC 198).